A 261-amino-acid chain; its full sequence is uncharacterized protein (261 aa).

Positions 7–122 constitute a Response regulatory domain; that stretch reads TAVLADDEPL…RLASCCEKLQ (116 aa). 4-aspartylphosphate is present on Asp54. The HTH LytTR-type domain maps to 157 to 261; the sequence is LKASKGEEIH…RALQHLFKVS (105 aa).

This is an uncharacterized protein from Vibrio cholerae serotype O1 (strain ATCC 39315 / El Tor Inaba N16961).